Here is a 382-residue protein sequence, read N- to C-terminus: Two-component response regulator ARR14 (382 aa).

In terms of domain architecture, Response regulatory spans 12–128; it reads RILVVDDDTS…ELKNIWQHVV (117 aa). 4-aspartylphosphate is present on aspartate 63. Basic residues predominate over residues 171–181; it reads CRNKKKKKKRS. The tract at residues 171 to 193 is disordered; the sequence is CRNKKKKKKRSVDRDDNEDDLLL. Positions 199-202 match the Nuclear localization signal motif; the sequence is KKSR. The segment at residues 202 to 252 is a DNA-binding region (myb-like GARP); that stretch reads RVVWSIELHQQFVNAVNKLGIDKAVPKRILELMNVPGLSRENVASHLQKFR.

It belongs to the ARR family. Type-B subfamily. In terms of assembly, binds the target DNA as a monomer. Post-translationally, two-component system major event consists of a His-to-Asp phosphorelay between a sensor histidine kinase (HK) and a response regulator (RR). In plants, the His-to-Asp phosphorelay involves an additional intermediate named Histidine-containing phosphotransfer protein (HPt). This multistep phosphorelay consists of a His-Asp-His-Asp sequential transfer of a phosphate group between first a His and an Asp of the HK protein, followed by the transfer to a conserved His of the HPt protein and finally the transfer to an Asp in the receiver domain of the RR protein. As to expression, predominantly expressed in young leaf tissue.

Its subcellular location is the nucleus. Its function is as follows. Transcriptional activator that binds specifically to the DNA sequence 5'-[AG]GATT-3'. Functions as a response regulator involved in His-to-Asp phosphorelay signal transduction system. Phosphorylation of the Asp residue in the receiver domain activates the ability of the protein to promote the transcription of target genes. Could directly activate some type-A response regulators in response to cytokinins. The protein is Two-component response regulator ARR14 (ARR14) of Arabidopsis thaliana (Mouse-ear cress).